We begin with the raw amino-acid sequence, 434 residues long: Alpha-enolase (434 aa).

N-acetylserine is present on Ser-2. Residue Lys-5 is modified to N6-acetyllysine. Ser-27 carries the post-translational modification Phosphoserine. An epitope recognized by CAR and healthy patient antibodies region spans residues 31-38 (FRAAVPSG). Ser-40 lines the Mg(2+) pocket. Phosphotyrosine is present on Tyr-44. The interval 56–63 (RYMGKGVS) is epitope recognized by CAR antibodies. Position 60 is an N6-acetyllysine; alternate (Lys-60). Lys-60 is modified (N6-succinyllysine; alternate). An N6-acetyllysine mark is found at Lys-64 and Lys-71. Position 89 is an N6-acetyllysine; alternate (Lys-89). Residue Lys-89 is modified to N6-succinyllysine; alternate. N6-acetyllysine occurs at positions 92 and 126. Residues 97 to 237 (MDGTENKSKF…KTAIGKAGYT (141 aa)) form a required for repression of c-myc promoter activity region. Residues His-158 and Glu-167 each coordinate substrate. 2 positions are modified to N6-acetyllysine: Lys-193 and Lys-199. Lys-202 is subject to N6-acetyllysine; alternate. A Glycyl lysine isopeptide (Lys-Gly) (interchain with G-Cter in SUMO2); alternate cross-link involves residue Lys-202. Catalysis depends on Glu-210, which acts as the Proton donor. An N6-acetyllysine; alternate mark is found at Lys-228 and Lys-233. The residue at position 228 (Lys-228) is an N6-succinyllysine; alternate. N6-(2-hydroxyisobutyryl)lysine; alternate is present on Lys-228. An N6-malonyllysine; alternate modification is found at Lys-233. Asp-245 lines the Mg(2+) pocket. Ser-254 is modified (phosphoserine). An N6-acetyllysine modification is found at Lys-256. Phosphoserine is present on residues Ser-263 and Ser-272. Lys-281 carries the N6-acetyllysine; alternate modification. N6-(2-hydroxyisobutyryl)lysine; alternate is present on Lys-281. Lys-285 bears the N6-acetyllysine mark. Tyr-287 bears the Phosphotyrosine mark. Ser-291 bears the Phosphoserine mark. The Mg(2+) site is built by Glu-293 and Asp-318. Substrate-binding residues include Glu-293 and Asp-318. Lys-335 and Lys-343 each carry N6-acetyllysine. The Proton acceptor role is filled by Lys-343. Substrate-binding positions include 370–373 (SHRS) and Lys-394. The required for interaction with PLG stretch occupies residues 405–434 (AKYNQLLRIEEELGSKAKFAGRNFRNPLAK). Lys-406 carries the post-translational modification N6-acetyllysine. Lys-420 carries the N6-acetyllysine; alternate modification. An N6-succinyllysine; alternate modification is found at Lys-420. Lys-420 is subject to N6-malonyllysine; alternate.

This sequence belongs to the enolase family. As to quaternary structure, mammalian enolase is composed of 3 isozyme subunits, alpha, beta and gamma, which can form homodimers or heterodimers which are cell-type and development-specific. ENO1 interacts with PLG in the neuronal plasma membrane and promotes its activation. The C-terminal lysine is required for this binding. Isoform MBP-1 interacts with TRAPPC2B. Interacts with ENO4 and PGAM2. Interacts with CMTM6. Mg(2+) serves as cofactor. In terms of processing, ISGylated. Lysine 2-hydroxyisobutyrylation (Khib) by p300/EP300 activates the phosphopyruvate hydratase activity. As to expression, the alpha/alpha homodimer is expressed in embryo and in most adult tissues. The alpha/beta heterodimer and the beta/beta homodimer are found in striated muscle, and the alpha/gamma heterodimer and the gamma/gamma homodimer in neurons.

The protein resides in the cytoplasm. It localises to the cell membrane. Its subcellular location is the myofibril. The protein localises to the sarcomere. It is found in the m line. The protein resides in the nucleus. It carries out the reaction (2R)-2-phosphoglycerate = phosphoenolpyruvate + H2O. Its pathway is carbohydrate degradation; glycolysis; pyruvate from D-glyceraldehyde 3-phosphate: step 4/5. Functionally, glycolytic enzyme the catalyzes the conversion of 2-phosphoglycerate to phosphoenolpyruvate. In addition to glycolysis, involved in various processes such as growth control, hypoxia tolerance and allergic responses. May also function in the intravascular and pericellular fibrinolytic system due to its ability to serve as a receptor and activator of plasminogen on the cell surface of several cell-types such as leukocytes and neurons. Stimulates immunoglobulin production. Binds to the myc promoter and acts as a transcriptional repressor. May be a tumor suppressor. The protein is Alpha-enolase (ENO1) of Homo sapiens (Human).